We begin with the raw amino-acid sequence, 570 residues long: Dihydroxy-acid dehydratase 2 (570 aa).

Cysteine 51 provides a ligand contact to [2Fe-2S] cluster. A Mg(2+)-binding site is contributed by aspartate 83. Cysteine 124 is a binding site for [2Fe-2S] cluster. 2 residues coordinate Mg(2+): aspartate 125 and lysine 126. Lysine 126 is subject to N6-carboxylysine. [2Fe-2S] cluster is bound at residue cysteine 196. Glutamate 446 is a Mg(2+) binding site. Serine 472 functions as the Proton acceptor in the catalytic mechanism.

Belongs to the IlvD/Edd family. Homodimer. The cofactor is [2Fe-2S] cluster. Requires Mg(2+) as cofactor.

It catalyses the reaction (2R)-2,3-dihydroxy-3-methylbutanoate = 3-methyl-2-oxobutanoate + H2O. It carries out the reaction (2R,3R)-2,3-dihydroxy-3-methylpentanoate = (S)-3-methyl-2-oxopentanoate + H2O. The protein operates within amino-acid biosynthesis; L-isoleucine biosynthesis; L-isoleucine from 2-oxobutanoate: step 3/4. It participates in amino-acid biosynthesis; L-valine biosynthesis; L-valine from pyruvate: step 3/4. Its function is as follows. Functions in the biosynthesis of branched-chain amino acids. Catalyzes the dehydration of (2R,3R)-2,3-dihydroxy-3-methylpentanoate (2,3-dihydroxy-3-methylvalerate) into 2-oxo-3-methylpentanoate (2-oxo-3-methylvalerate) and of (2R)-2,3-dihydroxy-3-methylbutanoate (2,3-dihydroxyisovalerate) into 2-oxo-3-methylbutanoate (2-oxoisovalerate), the penultimate precursor to L-isoleucine and L-valine, respectively. The chain is Dihydroxy-acid dehydratase 2 from Bordetella bronchiseptica (strain ATCC BAA-588 / NCTC 13252 / RB50) (Alcaligenes bronchisepticus).